The chain runs to 681 residues: Rabphilin-3A (681 aa).

The disordered stretch occupies residues 1-21 (MTDTVVNRWMYPGDGPLQSND). In terms of domain architecture, RabBD spans 40–157 (QRKQEELTDE…KRSGAWFFKG (118 aa)). The FYVE-type zinc-finger motif lies at 88–145 (GDGVNRCILCGEQLGMLGSACVVCEDCKKNVCTKCGVETSNNRPHPVWLCKICLEQRE). Zn(2+) is bound by residues Cys-94, Cys-97, Cys-111, Cys-114, Cys-119, Cys-122, Cys-137, and Cys-140. Residues 162 to 375 (VLPQPMPIKK…EEEANSYDSD (214 aa)) form a disordered region. Positions 199–208 (ARGDMEDRRP) are enriched in basic and acidic residues. An Omega-N-methylarginine modification is found at Arg-223. The segment covering 243–252 (RDSEGWDHAH) has biased composition (basic and acidic residues). Position 271 is a phosphoserine (Ser-271). The segment covering 278-296 (APAPVPSPAPPQPVQPGPP) has biased composition (pro residues). The segment covering 347 to 356 (AAPYSQAAPA) has biased composition (low complexity). Residues 362–375 (AEEEEEEANSYDSD) show a composition bias toward acidic residues. In terms of domain architecture, C2 1 spans 379-501 (TLGALEFSLL…KANQRKNFNI (123 aa)). Ca(2+)-binding residues include Met-409, Asp-410, Asp-416, Asp-471, Glu-472, Asp-473, Glu-479, Glu-526, Asp-568, Asp-574, Asp-628, Tyr-629, Asp-630, and Asp-636. Residues 537-670 (ERGKILVSLM…NKDKKIERWH (134 aa)) enclose the C2 2 domain. Phosphoserine occurs at positions 679 and 680.

In terms of assembly, interacts with RAB3B, RAB3C, RAB3D, RAB8A, RAB27A and RAB27B. Interacts with RAB3A; this interaction recruits RPH3A to synaptic vesicules. Interacts (via C2B domain) with SNAP25. Interacts with deubiquitinating enzyme CAND1; this interaction results in the deubiquitination of RPH3A. Interacts with GRIN2A and DLG4; this ternary complex regulates NMDA receptor composition at postsynaptic membranes. Interacts with SNCA. It depends on Ca(2+) as a cofactor. Ubiquitinated. Deubiquitinated by CAND1 to prevent its degradation. Specifically expressed in brain.

Its subcellular location is the cytoplasmic vesicle. It localises to the secretory vesicle. The protein resides in the synaptic vesicle membrane. It is found in the cell projection. The protein localises to the dendritic spine. Its subcellular location is the postsynaptic cell membrane. It localises to the membrane. Its function is as follows. Plays an essential role in docking and fusion steps of regulated exocytosis. At the presynaptic level, RPH3A is recruited by RAB3A to the synaptic vesicle membrane in a GTP-dependent manner where it modulates synaptic vesicle trafficking and calcium-triggered neurotransmitter release. In the post-synaptic compartment, forms a ternary complex with GRIN2A and DLG4 and regulates NMDA receptor stability. Also plays a role in the exocytosis of arginine vasopressin hormone. This Mus musculus (Mouse) protein is Rabphilin-3A (Rph3a).